The sequence spans 414 residues: Ribulose bisphosphate carboxylase large chain (414 aa).

Residues asparagine 101 and threonine 151 each contribute to the substrate site. Catalysis depends on lysine 153, which acts as the Proton acceptor. Lysine 155 is a substrate binding site. The Mg(2+) site is built by lysine 179, aspartate 181, and glutamate 182. Lysine 179 bears the N6-carboxylysine mark. The active-site Proton acceptor is the histidine 272. Substrate-binding residues include arginine 273, histidine 305, and serine 357.

This sequence belongs to the RuBisCO large chain family. Type I subfamily. In terms of assembly, heterohexadecamer of 8 large chains and 8 small chains; disulfide-linked. The disulfide link is formed within the large subunit homodimers. It depends on Mg(2+) as a cofactor. The disulfide bond which can form in the large chain dimeric partners within the hexadecamer appears to be associated with oxidative stress and protein turnover.

The protein resides in the plastid. Its subcellular location is the chloroplast. The enzyme catalyses 2 (2R)-3-phosphoglycerate + 2 H(+) = D-ribulose 1,5-bisphosphate + CO2 + H2O. It catalyses the reaction D-ribulose 1,5-bisphosphate + O2 = 2-phosphoglycolate + (2R)-3-phosphoglycerate + 2 H(+). RuBisCO catalyzes two reactions: the carboxylation of D-ribulose 1,5-bisphosphate, the primary event in carbon dioxide fixation, as well as the oxidative fragmentation of the pentose substrate in the photorespiration process. Both reactions occur simultaneously and in competition at the same active site. This is Ribulose bisphosphate carboxylase large chain (rbcL) from Onychium japonicum (Japanese claw fern).